A 265-amino-acid polypeptide reads, in one-letter code: Capsule polysaccharide export inner-membrane protein CtrC (265 aa).

The next 6 helical transmembrane spans lie at 37–57 (IGFL…VLMW), 64–84 (NVSA…MMMW), 121–141 (IAGA…IGWI), 147–167 (IFYM…LGLV), 178–198 (FGKV…VFFF), and 236–256 (NPWY…AVVA). In terms of domain architecture, ABC transmembrane type-2 spans 37 to 258 (IGFLWLFVEP…LLGLAVVARF (222 aa)).

This sequence belongs to the ABC-2 integral membrane protein family.

It is found in the cell inner membrane. Its function is as follows. May form an ATP-driven capsule polysaccharide export apparatus, in association with the CtrB and CtrD proteins. The chain is Capsule polysaccharide export inner-membrane protein CtrC (ctrC) from Neisseria meningitidis serogroup A / serotype 4A (strain DSM 15465 / Z2491).